A 300-amino-acid polypeptide reads, in one-letter code: UPF0761 membrane protein Patl_3954 (300 aa).

Helical transmembrane passes span 46–66 (LLSLVPFIMVFFTILSAFPAF), 103–123 (MGAIGILSLVVVALLLISNID), 138–158 (IIFTFAIYWMILTLGPLLIGL), 184–204 (MLKIVPFIASVCAFFILYMIV), 214–234 (ALVGAFMGALLFELSKKGFSF), and 248–268 (AMAVIPILFVWVYLSWIVVLL).

Belongs to the UPF0761 family.

The protein resides in the cell inner membrane. This chain is UPF0761 membrane protein Patl_3954, found in Pseudoalteromonas atlantica (strain T6c / ATCC BAA-1087).